Here is a 399-residue protein sequence, read N- to C-terminus: Acetate kinase (399 aa).

Asparagine 8 is a Mg(2+) binding site. Lysine 15 provides a ligand contact to ATP. Arginine 89 contacts substrate. Residue aspartate 147 is the Proton donor/acceptor of the active site. ATP contacts are provided by residues 207 to 211 (HMGNG), 284 to 286 (DMR), and 332 to 336 (GIGEN). Mg(2+) is bound at residue glutamate 385.

Belongs to the acetokinase family. As to quaternary structure, homodimer. Mg(2+) serves as cofactor. Requires Mn(2+) as cofactor.

It is found in the cytoplasm. It catalyses the reaction acetate + ATP = acetyl phosphate + ADP. It participates in metabolic intermediate biosynthesis; acetyl-CoA biosynthesis; acetyl-CoA from acetate: step 1/2. Catalyzes the formation of acetyl phosphate from acetate and ATP. Can also catalyze the reverse reaction. This chain is Acetate kinase, found in Streptococcus mutans serotype c (strain ATCC 700610 / UA159).